Consider the following 439-residue polypeptide: Glutamate--tRNA ligase 2 (439 aa).

Positions 6–16 match the 'HIGH' region motif; it reads PSPTGDMHIGN. Residues 232–236 carry the 'KMSKS' region motif; sequence KMSKR. Lys-235 is a binding site for ATP.

The protein belongs to the class-I aminoacyl-tRNA synthetase family. Glutamate--tRNA ligase type 1 subfamily. Monomer.

It is found in the cytoplasm. The enzyme catalyses tRNA(Glu) + L-glutamate + ATP = L-glutamyl-tRNA(Glu) + AMP + diphosphate. In terms of biological role, catalyzes the attachment of glutamate to tRNA(Glu) in a two-step reaction: glutamate is first activated by ATP to form Glu-AMP and then transferred to the acceptor end of tRNA(Glu). This chain is Glutamate--tRNA ligase 2, found in Helicobacter pylori (strain Shi470).